An 88-amino-acid chain; its full sequence is Small ribosomal subunit protein uS15c (88 aa).

Belongs to the universal ribosomal protein uS15 family. As to quaternary structure, part of the 30S ribosomal subunit.

It is found in the plastid. It localises to the chloroplast. In Aethionema grandiflorum (Persian stone-cress), this protein is Small ribosomal subunit protein uS15c (rps15).